The chain runs to 60 residues: Potassium channel toxin Tst-beta-KTx (60 aa).

In terms of domain architecture, BetaSPN-type CS-alpha/beta spans 26-60 (QFGCPAYEGYCNDHCNDIERKDGECHGFKCKCAKD). Cystine bridges form between cysteine 29/cysteine 50, cysteine 36/cysteine 55, and cysteine 40/cysteine 57.

This sequence belongs to the long chain scorpion toxin family. Class 1 subfamily. Expressed by the venom gland.

It is found in the secreted. Functionally, inhibits voltage-gated potassium channels Kv1.1/KCNA1, Kv1.2/KCNA2, and Kv1.3/KCNA3. Does not induce hemolytic activity, lactate dehydrogenase (LDH) release from mast cells, mast cell degranulation, and antimicrobial effects. In vivo, injection into mice causes moderate edema formation, but induces very weak or no change in nociceptive sensibility. It also reduces mice locomotion, suggesting an increase in anxiety, but causes no alteration in rearing (standing on hind limbs). The polypeptide is Potassium channel toxin Tst-beta-KTx (Tityus stigmurus (Brazilian scorpion)).